The following is a 1025-amino-acid chain: Multidrug resistance protein MdtC (1025 aa).

12 helical membrane passes run 16–36 (LLTL…PVAP), 333–353 (EVEQ…FVFL), 360–380 (LIPA…MYLC), 387–407 (LSLM…IVVL), 431–451 (VGFT…PLLM), 459–479 (FFAE…FVSV), 528–548 (WVLL…ISIP), 853–873 (LWLM…LYES), 875–895 (VHPL…LLAL), 897–917 (LFDT…IGIV), 953–973 (PILM…LTSG), and 984–1004 (ITIA…TPVV).

This sequence belongs to the resistance-nodulation-cell division (RND) (TC 2.A.6) family. MdtC subfamily. In terms of assembly, part of a tripartite efflux system composed of MdtA, MdtB and MdtC. MdtC forms a heteromultimer with MdtB.

The protein resides in the cell inner membrane. The sequence is that of Multidrug resistance protein MdtC from Pantoea ananatis (strain AJ13355).